We begin with the raw amino-acid sequence, 96 residues long: MPGKIAVEVAYALPEKQYLQRVSLQEGATVEEAIRASGLLELRTDIDLTKNKVGIYSRPTKLSDTVHDGDRVEIYRPLIADPKELRRQRAEKSANK.

It belongs to the UPF0125 (RnfH) family.

The chain is Protein RnfH from Escherichia fergusonii (strain ATCC 35469 / DSM 13698 / CCUG 18766 / IAM 14443 / JCM 21226 / LMG 7866 / NBRC 102419 / NCTC 12128 / CDC 0568-73).